Consider the following 256-residue polypeptide: Isoprenyl transferase (256 aa).

D33 is an active-site residue. A Mg(2+)-binding site is contributed by D33. Substrate is bound by residues 34 to 37, W38, R46, H50, and 78 to 80; these read GNGR and STE. N81 acts as the Proton acceptor in catalysis. Substrate contacts are provided by residues W82, R84, R201, and 207–209; that span reads RIS. Residue E220 coordinates Mg(2+).

This sequence belongs to the UPP synthase family. In terms of assembly, homodimer. The cofactor is Mg(2+).

Its function is as follows. Catalyzes the condensation of isopentenyl diphosphate (IPP) with allylic pyrophosphates generating different type of terpenoids. This Staphylococcus epidermidis (strain ATCC 35984 / DSM 28319 / BCRC 17069 / CCUG 31568 / BM 3577 / RP62A) protein is Isoprenyl transferase.